Reading from the N-terminus, the 139-residue chain is Transcription antitermination protein NusB (139 aa).

It belongs to the NusB family.

Its function is as follows. Involved in transcription antitermination. Required for transcription of ribosomal RNA (rRNA) genes. Binds specifically to the boxA antiterminator sequence of the ribosomal RNA (rrn) operons. This chain is Transcription antitermination protein NusB, found in Nitratiruptor sp. (strain SB155-2).